A 170-amino-acid polypeptide reads, in one-letter code: MILLKLYLTLAAILCQSRGTTSLDLDDLMTTNPEIQNEIINKHNDLRRTVDPPAKNMLKMSWDNIIAESAKRAALRCNQNEHTPVSGRTIGGVVCGENYFMSSNPRTWSFGIQSWFDERNYFKFGFGPTRAGVMVGHYTQVVWYKSYKMGCAINLCPNEPLKYFLVCQYC.

Residues 1–22 (MILLKLYLTLAAILCQSRGTTS) form the signal peptide. The SCP domain occupies 41 to 169 (NKHNDLRRTV…PLKYFLVCQY (129 aa)). 3 cysteine pairs are disulfide-bonded: C77/C156, C95/C170, and C151/C167.

Belongs to the CRISP family. Contains 8 disulfide bonds. Expressed by the venom gland.

It is found in the secreted. In terms of biological role, blocks ryanodine receptors, and potassium channels. In Varanus acanthurus (Ridge-tailed monitor), this protein is Cysteine-rich venom protein VAR4.